The sequence spans 359 residues: Putative gluconeogenesis factor (359 aa).

The tract at residues 317 to 359 (VGNQDSSAPTVAATEQIRLDGKRPQTGVNGPVGKGPRGDDAWR) is disordered.

The protein belongs to the gluconeogenesis factor family.

The protein resides in the cytoplasm. In terms of biological role, required for morphogenesis under gluconeogenic growth conditions. The polypeptide is Putative gluconeogenesis factor (Mycobacterium leprae (strain TN)).